Reading from the N-terminus, the 315-residue chain is L-lactate dehydrogenase (315 aa).

Residues V17, D38, K43, Y69, and 83–84 contribute to the NAD(+) site; that span reads GA. Positions 86 and 92 each coordinate substrate. Residues S105, 122-124, and S147 contribute to the NAD(+) site; that span reads ATN. Residue 124-127 coordinates substrate; that stretch reads NPVD. Residue 152–155 participates in substrate binding; that stretch reads DTAR. Beta-D-fructose 1,6-bisphosphate is bound by residues R157 and H172. H179 functions as the Proton acceptor in the catalytic mechanism. Residue Y223 is modified to Phosphotyrosine. T232 is a substrate binding site.

The protein belongs to the LDH/MDH superfamily. LDH family. Homotetramer.

It is found in the cytoplasm. It catalyses the reaction (S)-lactate + NAD(+) = pyruvate + NADH + H(+). It participates in fermentation; pyruvate fermentation to lactate; (S)-lactate from pyruvate: step 1/1. With respect to regulation, allosterically activated by fructose 1,6-bisphosphate (FBP). In terms of biological role, catalyzes the conversion of lactate to pyruvate. The polypeptide is L-lactate dehydrogenase (Macrococcus caseolyticus (strain JCSC5402) (Macrococcoides caseolyticum)).